We begin with the raw amino-acid sequence, 142 residues long: Large ribosomal subunit protein uL11 (142 aa).

This sequence belongs to the universal ribosomal protein uL11 family. Part of the ribosomal stalk of the 50S ribosomal subunit. Interacts with L10 and the large rRNA to form the base of the stalk. L10 forms an elongated spine to which L12 dimers bind in a sequential fashion forming a multimeric L10(L12)X complex. One or more lysine residues are methylated.

In terms of biological role, forms part of the ribosomal stalk which helps the ribosome interact with GTP-bound translation factors. The chain is Large ribosomal subunit protein uL11 from Bradyrhizobium sp. (strain BTAi1 / ATCC BAA-1182).